The primary structure comprises 598 residues: Probable translation initiation factor IF-2 (598 aa).

Residues 3-225 form the tr-type G domain; the sequence is LRCPIVSVLG…GLAQKFLEQK (223 aa). The G1 stretch occupies residues 12-19; sequence GHVDHGKT. 12 to 19 lines the GTP pocket; that stretch reads GHVDHGKT. The segment at 37-41 is G2; sequence GITQH. The interval 76–79 is G3; that stretch reads DTPG. GTP is bound by residues 76–80 and 130–133; these read DTPGH and NKLD. The G4 stretch occupies residues 130-133; the sequence is NKLD. The G5 stretch occupies residues 200–202; the sequence is SAI.

It belongs to the TRAFAC class translation factor GTPase superfamily. Classic translation factor GTPase family. IF-2 subfamily.

In terms of biological role, function in general translation initiation by promoting the binding of the formylmethionine-tRNA to ribosomes. Seems to function along with eIF-2. The polypeptide is Probable translation initiation factor IF-2 (Methanococcus vannielii (strain ATCC 35089 / DSM 1224 / JCM 13029 / OCM 148 / SB)).